A 565-amino-acid chain; its full sequence is Sulfite reductase [NADPH] hemoprotein beta-component (565 aa).

[4Fe-4S] cluster-binding residues include C429, C435, C474, and C478. Position 478 (C478) interacts with siroheme.

This sequence belongs to the nitrite and sulfite reductase 4Fe-4S domain family. As to quaternary structure, alpha(8)-beta(8). The alpha component is a flavoprotein, the beta component is a hemoprotein. Siroheme serves as cofactor. Requires [4Fe-4S] cluster as cofactor.

It carries out the reaction hydrogen sulfide + 3 NADP(+) + 3 H2O = sulfite + 3 NADPH + 4 H(+). Its pathway is sulfur metabolism; hydrogen sulfide biosynthesis; hydrogen sulfide from sulfite (NADPH route): step 1/1. In terms of biological role, component of the sulfite reductase complex that catalyzes the 6-electron reduction of sulfite to sulfide. This is one of several activities required for the biosynthesis of L-cysteine from sulfate. This chain is Sulfite reductase [NADPH] hemoprotein beta-component, found in Shewanella putrefaciens (strain CN-32 / ATCC BAA-453).